We begin with the raw amino-acid sequence, 323 residues long: tRNA-cytidine(32) 2-sulfurtransferase (323 aa).

Positions 49 to 54 match the PP-loop motif motif; it reads SGGKDS. Cysteine 124, cysteine 127, and cysteine 215 together coordinate [4Fe-4S] cluster.

Belongs to the TtcA family. In terms of assembly, homodimer. The cofactor is Mg(2+). [4Fe-4S] cluster is required as a cofactor.

The protein resides in the cytoplasm. The catalysed reaction is cytidine(32) in tRNA + S-sulfanyl-L-cysteinyl-[cysteine desulfurase] + AH2 + ATP = 2-thiocytidine(32) in tRNA + L-cysteinyl-[cysteine desulfurase] + A + AMP + diphosphate + H(+). It functions in the pathway tRNA modification. Catalyzes the ATP-dependent 2-thiolation of cytidine in position 32 of tRNA, to form 2-thiocytidine (s(2)C32). The sulfur atoms are provided by the cysteine/cysteine desulfurase (IscS) system. The chain is tRNA-cytidine(32) 2-sulfurtransferase from Shewanella denitrificans (strain OS217 / ATCC BAA-1090 / DSM 15013).